The following is a 371-amino-acid chain: Proton-coupled zinc antiporter SLC30A2 (371 aa).

Residues 1-69 (MQTMDKQNLL…DPEKQRARRK (69 aa)) are Cytoplasmic-facing. Residues 47-50 (HYCH) carry the Mitochondrial localization signal motif. C49 is a binding site for Zn(2+). The chain crosses the membrane as a helical span at residues 70 to 90 (LYVASAICLVFMIGEIIGGYL). Topologically, residues 91–99 (AQSLAIMTD) are lumenal. A helical membrane pass occupies residues 100–120 (AAHLLTDFASMLISLFALWVS). The Zn(2+) site is built by H102 and D106. The Cytoplasmic segment spans residues 121 to 136 (SRPATKTMNFGWHRAE). Residues 137–157 (ILGALLSVLSIWVVTGVLVYL) traverse the membrane as a helical segment. At 158 to 172 (AVQRLISGDYEIKGD) the chain is on the lumenal side. Residues 173–193 (TMLITSGCAVAVNLIMGLALH) traverse the membrane as a helical segment. Topologically, residues 194-219 (QSGHGHSHGNSRDDSSQQQNPSVRAA) are cytoplasmic. A helical transmembrane segment spans residues 220-240 (FIHVIGDLLQSVGVLVAAYII). 2 residues coordinate Zn(2+): H222 and D226. Over 241-248 (YFKPEYKY) the chain is Lumenal. The chain crosses the membrane as a helical span at residues 249–269 (VDPICTFLFSILVLGTTLTIL). At 270 to 303 (RDVILVLMEGTPKGVDFTTVKNLLLSVDGVEALH) the chain is on the cytoplasmic side. The Lysosomal targeting motif motif lies at 293-294 (LL). At S295 the chain carries Phosphoserine. Zn(2+)-binding residues include H303, H320, and E354. Residues 304–324 (SLHIWALTVAQPVLSVHIAIA) form a helical membrane-spanning segment. Residues 325 to 371 (QNADAQAVLKVARDRLQGKFNFHTMTIQIEKYSEDMKNCQACQGPLE) are Lumenal-facing.

This sequence belongs to the cation diffusion facilitator (CDF) transporter (TC 2.A.4) family. SLC30A subfamily. In terms of assembly, homodimer. Interacts (via lysosomal targeting motif) with AP3D1; in AP-3-mediated transport to lysosomes. Interacts with TMEM163. Post-translationally, phosphorylated at Ser-295. Phosphorylation at Ser-295 prevents localization to lysosomes. Dephosphorylation of Ser-295 which triggers localization to lysosomes, accumulation of zinc into lysosomes and lysosomal-mediated cell death is induced by TNF-alpha.

It localises to the cytoplasmic vesicle. Its subcellular location is the secretory vesicle membrane. The protein localises to the zymogen granule membrane. It is found in the endosome membrane. The protein resides in the lysosome membrane. It localises to the mitochondrion inner membrane. Its subcellular location is the cell membrane. The enzyme catalyses Zn(2+)(in) + 2 H(+)(out) = Zn(2+)(out) + 2 H(+)(in). Functionally, electroneutral proton-coupled antiporter concentrating zinc ions into a variety of intracellular organelles including endosomes, zymogen granules and mitochondria. Thereby, plays a crucial role in cellular zinc homeostasis to confer upon cells protection against its potential cytotoxicity. Regulates the zinc concentration of milk, through the transport of zinc ions into secretory vesicles of mammary cells. By concentrating zinc ions into lysosomes participates to lysosomal-mediated cell death during early mammary gland involution. In terms of biological role, electroneutral proton-coupled antiporter mediating the efflux of zinc ions through the plasma membrane. This is Proton-coupled zinc antiporter SLC30A2 from Mus musculus (Mouse).